A 179-amino-acid chain; its full sequence is Large ribosomal subunit protein uL5 (179 aa).

The protein belongs to the universal ribosomal protein uL5 family. As to quaternary structure, part of the 50S ribosomal subunit; part of the 5S rRNA/L5/L18/L25 subcomplex. Contacts the 5S rRNA and the P site tRNA. Forms a bridge to the 30S subunit in the 70S ribosome.

This is one of the proteins that bind and probably mediate the attachment of the 5S RNA into the large ribosomal subunit, where it forms part of the central protuberance. In the 70S ribosome it contacts protein S13 of the 30S subunit (bridge B1b), connecting the 2 subunits; this bridge is implicated in subunit movement. Contacts the P site tRNA; the 5S rRNA and some of its associated proteins might help stabilize positioning of ribosome-bound tRNAs. The protein is Large ribosomal subunit protein uL5 of Pseudomonas savastanoi pv. phaseolicola (strain 1448A / Race 6) (Pseudomonas syringae pv. phaseolicola (strain 1448A / Race 6)).